The following is a 178-amino-acid chain: Large ribosomal subunit protein uL5 (178 aa).

It belongs to the universal ribosomal protein uL5 family. In terms of assembly, part of the 50S ribosomal subunit; part of the 5S rRNA/L5/L18/L25 subcomplex. Contacts the 5S rRNA and the P site tRNA. Forms a bridge to the 30S subunit in the 70S ribosome.

In terms of biological role, this is one of the proteins that bind and probably mediate the attachment of the 5S RNA into the large ribosomal subunit, where it forms part of the central protuberance. In the 70S ribosome it contacts protein S13 of the 30S subunit (bridge B1b), connecting the 2 subunits; this bridge is implicated in subunit movement. Contacts the P site tRNA; the 5S rRNA and some of its associated proteins might help stabilize positioning of ribosome-bound tRNAs. The polypeptide is Large ribosomal subunit protein uL5 (Syntrophomonas wolfei subsp. wolfei (strain DSM 2245B / Goettingen)).